The chain runs to 616 residues: Membrane protein insertase YidC (616 aa).

Residues 9-29 (ILAVILSGLVLIAWQYFYNVP) traverse the membrane as a helical segment. Positions 37 to 80 (QQQAQAELQKTTPQPTASATPGATPQSGGAAQPSTPAAGQQAQP) are disordered. The span at 44-71 (LQKTTPQPTASATPGATPQSGGAAQPST) shows a compositional bias: polar residues. Helical transmembrane passes span 388–408 (FFGNFGISILLVTVIVKLLFF), 462–482 (LPVVIQIPVFFSLYKVLFVTI), 520–540 (VFGHYLALGIWPIIMGITMWF), and 559–579 (WMPLIFTFMLAGFPAGLVIYW).

This sequence belongs to the OXA1/ALB3/YidC family. Type 1 subfamily. As to quaternary structure, interacts with the Sec translocase complex via SecD. Specifically interacts with transmembrane segments of nascent integral membrane proteins during membrane integration.

It is found in the cell inner membrane. Its function is as follows. Required for the insertion and/or proper folding and/or complex formation of integral membrane proteins into the membrane. Involved in integration of membrane proteins that insert both dependently and independently of the Sec translocase complex, as well as at least some lipoproteins. Aids folding of multispanning membrane proteins. The sequence is that of Membrane protein insertase YidC from Bradyrhizobium diazoefficiens (strain JCM 10833 / BCRC 13528 / IAM 13628 / NBRC 14792 / USDA 110).